Consider the following 433-residue polypeptide: Glutamate-1-semialdehyde 2,1-aminomutase (433 aa).

K269 is modified (N6-(pyridoxal phosphate)lysine).

This sequence belongs to the class-III pyridoxal-phosphate-dependent aminotransferase family. HemL subfamily. As to quaternary structure, homodimer. The cofactor is pyridoxal 5'-phosphate.

The protein localises to the cytoplasm. The catalysed reaction is (S)-4-amino-5-oxopentanoate = 5-aminolevulinate. Its pathway is porphyrin-containing compound metabolism; protoporphyrin-IX biosynthesis; 5-aminolevulinate from L-glutamyl-tRNA(Glu): step 2/2. The chain is Glutamate-1-semialdehyde 2,1-aminomutase from Renibacterium salmoninarum (strain ATCC 33209 / DSM 20767 / JCM 11484 / NBRC 15589 / NCIMB 2235).